Consider the following 339-residue polypeptide: Malate/(S)-sulfolactate dehydrogenase (339 aa).

It belongs to the LDH2/MDH2 oxidoreductase family. In terms of assembly, homodimer.

It is found in the cytoplasm. It carries out the reaction (S)-malate + NAD(+) = oxaloacetate + NADH + H(+). The enzyme catalyses (S)-malate + NADP(+) = oxaloacetate + NADPH + H(+). It catalyses the reaction (2S)-3-sulfolactate + NAD(+) = 3-sulfopyruvate + NADH + H(+). In terms of biological role, acts on oxaloacetate, sulfopyruvate but not on pyruvate. Has a higher selectivity for the coenzyme NADH than for NADPH. This is Malate/(S)-sulfolactate dehydrogenase (mdh) from Methanothermus fervidus (strain ATCC 43054 / DSM 2088 / JCM 10308 / V24 S).